The following is a 1391-amino-acid chain: DNA-directed RNA polymerase subunit beta' (1391 aa).

Residues cysteine 72, cysteine 74, cysteine 87, and cysteine 90 each coordinate Zn(2+). Residues aspartate 462, aspartate 464, and aspartate 466 each coordinate Mg(2+). The Zn(2+) site is built by cysteine 816, cysteine 890, cysteine 897, and cysteine 900.

This sequence belongs to the RNA polymerase beta' chain family. The RNAP catalytic core consists of 2 alpha, 1 beta, 1 beta' and 1 omega subunit. When a sigma factor is associated with the core the holoenzyme is formed, which can initiate transcription. Mg(2+) is required as a cofactor. Zn(2+) serves as cofactor.

It catalyses the reaction RNA(n) + a ribonucleoside 5'-triphosphate = RNA(n+1) + diphosphate. Functionally, DNA-dependent RNA polymerase catalyzes the transcription of DNA into RNA using the four ribonucleoside triphosphates as substrates. The sequence is that of DNA-directed RNA polymerase subunit beta' from Neisseria meningitidis serogroup B (strain ATCC BAA-335 / MC58).